Here is a 107-residue protein sequence, read N- to C-terminus: MTYVVTDECVKCKYTDCVEVCPVDCFYEGEFMLVINPDECIDCGVCVPDCPIDAIKPETPELIEWVERAKHFIEHEKWQVITKKKPALPDADKFKDEKDKFNKYIGV.

2 4Fe-4S ferredoxin-type domains span residues 2–30 (TYVVTDECVKCKYTDCVEVCPVDCFYEGE) and 31–60 (FMLVINPDECIDCGVCVPDCPIDAIKPETP). Residues C9 and C17 each coordinate [3Fe-4S] cluster. Positions 21, 40, 43, and 46 each coordinate [4Fe-4S] cluster. [3Fe-4S] cluster is bound at residue C50.

The cofactor is [4Fe-4S] cluster. [3Fe-4S] cluster serves as cofactor.

Its function is as follows. Ferredoxins are iron-sulfur proteins that transfer electrons in a wide variety of metabolic reactions. In Rickettsia bellii (strain RML369-C), this protein is Ferredoxin (fdxA).